Consider the following 152-residue polypeptide: Outer membrane protein assembly factor BamE (152 aa).

An N-terminal signal peptide occupies residues 1-32; it reads MIDQNHDSEEQAQMQKLTRTVTLTVALTLVSG. Cysteine 33 carries the N-palmitoyl cysteine lipid modification. Residue cysteine 33 is the site of S-diacylglycerol cysteine attachment. The segment at 114-152 is disordered; the sequence is IDRHGDFSRPPSVADERGIGPTDSTNARGNLLNARPDDE.

This sequence belongs to the BamE family. Part of the Bam complex.

The protein localises to the cell outer membrane. Part of the outer membrane protein assembly complex, which is involved in assembly and insertion of beta-barrel proteins into the outer membrane. The protein is Outer membrane protein assembly factor BamE of Halomonas elongata (strain ATCC 33173 / DSM 2581 / NBRC 15536 / NCIMB 2198 / 1H9).